Reading from the N-terminus, the 646-residue chain is 1-deoxy-D-xylulose-5-phosphate synthase (646 aa).

Residues His-86 and 127–129 (AHS) contribute to the thiamine diphosphate site. Asp-158 is a binding site for Mg(2+). Thiamine diphosphate-binding positions include 159–160 (GA), Asn-188, Tyr-295, and Glu-377. Residue Asn-188 participates in Mg(2+) binding.

The protein belongs to the transketolase family. DXPS subfamily. In terms of assembly, homodimer. Requires Mg(2+) as cofactor. The cofactor is thiamine diphosphate.

It catalyses the reaction D-glyceraldehyde 3-phosphate + pyruvate + H(+) = 1-deoxy-D-xylulose 5-phosphate + CO2. The protein operates within metabolic intermediate biosynthesis; 1-deoxy-D-xylulose 5-phosphate biosynthesis; 1-deoxy-D-xylulose 5-phosphate from D-glyceraldehyde 3-phosphate and pyruvate: step 1/1. In terms of biological role, catalyzes the acyloin condensation reaction between C atoms 2 and 3 of pyruvate and glyceraldehyde 3-phosphate to yield 1-deoxy-D-xylulose-5-phosphate (DXP). This is 1-deoxy-D-xylulose-5-phosphate synthase from Burkholderia cenocepacia (strain HI2424).